Reading from the N-terminus, the 187-residue chain is Elongation factor P (187 aa).

The residue at position 34 (lysine 34) is an N6-(3,6-diaminohexanoyl)-5-hydroxylysine.

It belongs to the elongation factor P family. May be beta-lysylated on the epsilon-amino group of Lys-34 by the combined action of EpmA and EpmB, and then hydroxylated on the C5 position of the same residue by EpmC (if this protein is present). Lysylation is critical for the stimulatory effect of EF-P on peptide-bond formation. The lysylation moiety may extend toward the peptidyltransferase center and stabilize the terminal 3-CCA end of the tRNA. Hydroxylation of the C5 position on Lys-34 may allow additional potential stabilizing hydrogen-bond interactions with the P-tRNA.

The protein resides in the cytoplasm. It functions in the pathway protein biosynthesis; polypeptide chain elongation. Functionally, involved in peptide bond synthesis. Alleviates ribosome stalling that occurs when 3 or more consecutive Pro residues or the sequence PPG is present in a protein, possibly by augmenting the peptidyl transferase activity of the ribosome. Modification of Lys-34 is required for alleviation. The protein is Elongation factor P of Buchnera aphidicola subsp. Schizaphis graminum (strain Sg).